A 448-amino-acid polypeptide reads, in one-letter code: Phosphoglucosamine mutase (448 aa).

Residue serine 99 is the Phosphoserine intermediate of the active site. Mg(2+) contacts are provided by serine 99, aspartate 238, aspartate 240, and aspartate 242. At serine 99 the chain carries Phosphoserine.

This sequence belongs to the phosphohexose mutase family. It depends on Mg(2+) as a cofactor. In terms of processing, activated by phosphorylation.

It catalyses the reaction alpha-D-glucosamine 1-phosphate = D-glucosamine 6-phosphate. Its function is as follows. Catalyzes the conversion of glucosamine-6-phosphate to glucosamine-1-phosphate. This Marinomonas sp. (strain MWYL1) protein is Phosphoglucosamine mutase.